A 131-amino-acid polypeptide reads, in one-letter code: Large ribosomal subunit protein bL17 (131 aa).

Belongs to the bacterial ribosomal protein bL17 family. As to quaternary structure, part of the 50S ribosomal subunit. Contacts protein L32.

The protein is Large ribosomal subunit protein bL17 of Herminiimonas arsenicoxydans.